The primary structure comprises 1062 residues: Inactive tyrosine-protein kinase 7 (1062 aa).

A signal peptide spans M1–A22. Ig-like C2-type domains are found at residues A23–N112, P120–S210, A217–L309, P301–T399, P404–Q489, K495–L578, and G570–L672. Topologically, residues A23–T696 are extracellular. The cysteines at positions 45 and 93 are disulfide-linked. N-linked (GlcNAc...) asparagine glycans are attached at residues N98, N108, N176, N206, N260, and N275. A disulfide bridge links C142 with C192. 2 cysteine pairs are disulfide-bonded: C238–C293 and C335–C383. 4 N-linked (GlcNAc...) asparagine glycosylation sites follow: N397, N455, N559, and N638. Intrachain disulfides connect C425–C473, C516–C562, and C605–C656. A helical transmembrane segment spans residues I697–Y717. Residues C718–Q1062 are Cytoplasmic-facing. 2 disordered regions span residues Q728–Q750 and N1039–Q1062. The interval A786–Q1062 is interaction with CTNNB1. Residues L788–A1058 enclose the Protein kinase; inactive domain. S1056 carries the post-translational modification Phosphoserine.

The protein belongs to the protein kinase superfamily. Tyr protein kinase family. Insulin receptor subfamily. In terms of assembly, interacts with CTNNB1. In terms of processing, MMP14 cleaves PTK7 between Pro-613 and Leu-614 generating an N-terminal soluble (70 kDa) fragment and a membrane C-terminal (50 kDa) fragment. Proteolysis by MMP14 regulates PTK7 function in non-canonical Wnt signaling pathway. As to expression, expressed at high levels in lung and un-pregnant uterus among adult tissues, and in the tail, limbs, somites, gut and craniofacial regions among embryonic tissues.

It is found in the membrane. The protein localises to the cell junction. Functionally, inactive tyrosine kinase involved in Wnt signaling pathway. Component of both the non-canonical (also known as the Wnt/planar cell polarity signaling) and the canonical Wnt signaling pathway. Functions in cell adhesion, cell migration, cell polarity, proliferation, actin cytoskeleton reorganization and apoptosis. Has a role in embryogenesis, epithelial tissue organization and angiogenesis. The protein is Inactive tyrosine-protein kinase 7 (Ptk7) of Mus musculus (Mouse).